The following is an 812-amino-acid chain: Toll-like receptor 10 (812 aa).

The first 19 residues, 1 to 19 (MRYIRSIYIFCSIVTSVRS), serve as a signal peptide directing secretion. Residues 20-577 (GASELPEERE…VHLPEISCNT (558 aa)) lie on the Extracellular side of the membrane. LRR repeat units follow at residues 24–46 (LPEERELTTNFSSMSLTKVPEGL), 49–70 (ITTTLDLSYNLLFQLQHSDFRS), 73–94 (KLKVLILCHNRIQELDIKTFEF), 97–118 (ELSYLDVSNNRLKSVTWFSLAG), and 119–139 (LRHLDLSFNDFDTLPISVETG). Asparagine 33 carries an N-linked (GlcNAc...) asparagine glycan. The N-linked (GlcNAc...) asparagine glycan is linked to asparagine 140. The LRR 6 repeat unit spans residues 143 to 166 (HLETLGLSGAKIQKSDFQKIAHLQ). Residue asparagine 189 is glycosylated (N-linked (GlcNAc...) asparagine). 4 LRR repeats span residues 296–321 (SNTVMRTIKLEHVHFRIFNIPQESIY), 325–348 (TKMDIENLTISDAQMPHMLFPMYP), 350–373 (RFQYLNFANNILTDDVFKKSIQLP), and 374–395 (HLKTLILKDNKLETLSLVSHFA). N-linked (GlcNAc...) asparagine glycosylation occurs at asparagine 331. Asparagine 397 carries N-linked (GlcNAc...) asparagine glycosylation. 5 LRR repeats span residues 399–420 (SLRHLDLSENLLQHENDENCLW), 423–443 (TLVTMNLSFNKFADSVFGCLP), 445–467 (NIQILDLNSNKIQTVPKAITHLT), 468–489 (SLRELNLAFNFLTDLPGCSHFR), and 490–510 (RLLVLNVEMNLILSSSLDFFQ). A glycan (N-linked (GlcNAc...) asparagine) is linked at asparagine 428. Residues 523 to 577 (NPFRCTCELRDFIQLGKYSEGMMVGWSDSYICEYPLNLKGTQLKDVHLPEISCNT) enclose the LRRCT domain. The chain crosses the membrane as a helical span at residues 578 to 598 (GLLIVTIVVVMLVLGMAVAFC). The Cytoplasmic portion of the chain corresponds to 599–812 (CLHFDLPWYL…AISLIRTDCL (214 aa)). A TIR domain is found at 633–776 (VQFHVFISYS…LFWANLRAAL (144 aa)).

Belongs to the Toll-like receptor family. Binds MYD88 via their respective TIR domains.

It localises to the membrane. In terms of biological role, participates in the innate immune response to microbial agents. Acts via MYD88 and TRAF6, leading to NF-kappa-B activation, cytokine secretion and the inflammatory response. This Bos taurus (Bovine) protein is Toll-like receptor 10 (TLR10).